A 183-amino-acid polypeptide reads, in one-letter code: Potassium-transporting ATPase KdpC subunit (183 aa).

Residues 10 to 30 (LTVFTLILFAVIYPLAIYGIA) form a helical membrane-spanning segment.

It belongs to the KdpC family. In terms of assembly, the system is composed of three essential subunits: KdpA, KdpB and KdpC.

Its subcellular location is the cell inner membrane. Functionally, part of the high-affinity ATP-driven potassium transport (or Kdp) system, which catalyzes the hydrolysis of ATP coupled with the electrogenic transport of potassium into the cytoplasm. This subunit acts as a catalytic chaperone that increases the ATP-binding affinity of the ATP-hydrolyzing subunit KdpB by the formation of a transient KdpB/KdpC/ATP ternary complex. In Flavobacterium johnsoniae (strain ATCC 17061 / DSM 2064 / JCM 8514 / BCRC 14874 / CCUG 350202 / NBRC 14942 / NCIMB 11054 / UW101) (Cytophaga johnsonae), this protein is Potassium-transporting ATPase KdpC subunit.